The sequence spans 93 residues: Ribonuclease P protein component 4 (93 aa).

Residues cysteine 55, cysteine 58, cysteine 81, and cysteine 83 each contribute to the Zn(2+) site.

It belongs to the eukaryotic/archaeal RNase P protein component 4 family. In terms of assembly, consists of a catalytic RNA component and at least 4-5 protein subunits. Zn(2+) is required as a cofactor.

Its subcellular location is the cytoplasm. The enzyme catalyses Endonucleolytic cleavage of RNA, removing 5'-extranucleotides from tRNA precursor.. Part of ribonuclease P, a protein complex that generates mature tRNA molecules by cleaving their 5'-ends. This chain is Ribonuclease P protein component 4, found in Halobacterium salinarum (strain ATCC 29341 / DSM 671 / R1).